Consider the following 600-residue polypeptide: Elongation factor 4 (600 aa).

The region spanning 5–187 is the tr-type G domain; that stretch reads SRIRNFSIIA…DLIKKIPPPK (183 aa). GTP is bound by residues 17–22 and 134–137; these read DHGKST and NKMD.

The protein belongs to the TRAFAC class translation factor GTPase superfamily. Classic translation factor GTPase family. LepA subfamily.

It localises to the cell inner membrane. It carries out the reaction GTP + H2O = GDP + phosphate + H(+). Required for accurate and efficient protein synthesis under certain stress conditions. May act as a fidelity factor of the translation reaction, by catalyzing a one-codon backward translocation of tRNAs on improperly translocated ribosomes. Back-translocation proceeds from a post-translocation (POST) complex to a pre-translocation (PRE) complex, thus giving elongation factor G a second chance to translocate the tRNAs correctly. Binds to ribosomes in a GTP-dependent manner. This is Elongation factor 4 from Marinobacter nauticus (strain ATCC 700491 / DSM 11845 / VT8) (Marinobacter aquaeolei).